The chain runs to 184 residues: Large ribosomal subunit protein uL6 (184 aa).

This sequence belongs to the universal ribosomal protein uL6 family. In terms of assembly, part of the 50S ribosomal subunit.

This protein binds to the 23S rRNA, and is important in its secondary structure. It is located near the subunit interface in the base of the L7/L12 stalk, and near the tRNA binding site of the peptidyltransferase center. The protein is Large ribosomal subunit protein uL6 of Onion yellows phytoplasma (strain OY-M).